A 207-amino-acid polypeptide reads, in one-letter code: Lipid A acyltransferase PagP (207 aa).

Residues 1–24 form the signal peptide; that stretch reads MKFDLTAACTLSATLLVSSGTVFA. Active-site residues include His-79, Asp-122, and Ser-123.

The protein belongs to the lipid A palmitoyltransferase family. In terms of assembly, homodimer.

It is found in the cell outer membrane. The enzyme catalyses a lipid A + a 1,2-diacyl-sn-glycero-3-phosphocholine = a hepta-acyl lipid A + a 2-acyl-sn-glycero-3-phosphocholine. It carries out the reaction a lipid IVA + a 1,2-diacyl-sn-glycero-3-phosphocholine = a lipid IVB + a 2-acyl-sn-glycero-3-phosphocholine. The catalysed reaction is a lipid IIA + a 1,2-diacyl-sn-glycero-3-phosphocholine = a lipid IIB + a 2-acyl-sn-glycero-3-phosphocholine. In terms of biological role, transfers a fatty acid residue from the sn-1 position of a phospholipid to the N-linked hydroxyfatty acid chain on the proximal unit of lipid A or its precursors. This is Lipid A acyltransferase PagP from Photorhabdus laumondii subsp. laumondii (strain DSM 15139 / CIP 105565 / TT01) (Photorhabdus luminescens subsp. laumondii).